A 201-amino-acid chain; its full sequence is Recombination protein RecR (201 aa).

The segment at 57 to 72 (CQVCYSLSDNDICDIC) adopts a C4-type zinc-finger fold. A Toprim domain is found at 80 to 177 (NKICIVESYP…RITRITYGIS (98 aa)).

Belongs to the RecR family.

May play a role in DNA repair. It seems to be involved in an RecBC-independent recombinational process of DNA repair. It may act with RecF and RecO. This chain is Recombination protein RecR, found in Brachyspira hyodysenteriae (strain ATCC 49526 / WA1).